The chain runs to 184 residues: Chromobox protein homolog hpl-1 (184 aa).

A compositionally biased stretch (polar residues) spans 1-13 (MSRQNPVRSTRGN). 2 disordered regions span residues 1 to 27 (MSRQ…QDAP) and 87 to 115 (AAKR…STSD). The 59-residue stretch at 37–95 (FVVEKVLNKRLTRGGSEYYIKWQGFPESECSWEPIENLQCDRMIQEYEKEAAKRTTRKR) folds into the Chromo domain. The span at 99-115 (PQPSTSSSAELQPSTSD) shows a compositional bias: polar residues.

In terms of assembly, interacts with histone demethylase spr-5. Interacts with chromobox protein homolog hpl-2. Interacts with histone H3 tails methylated at 'Lys-9' (H3K9me3) and 'Lys-23'(H3K23me2). Interacts with histone H1 variant his-24 (when monomethylated at 'Lys-14'); the interaction is direct. May interact with the REST corepressor rcor-1, histone deacetylase hda-1, and the histone demethylase lsd-1.

The protein resides in the nucleus. In terms of biological role, seems to be involved in transcriptional silencing in heterochromatin-like complexes. Involved in epigenetic repression. Probably does not act as global transcriptional repressor. Plays a role in linking epigenetic regulation with the innate immune response. Acting in concert with chromobox protein homolog hpl-2 and histone H1 protein his-24, involved in reproduction, somatic gonad development, male tail development and vulval cell fate decisions; perhaps as a result of modulating expression of Hox genes mab-5 and egl-5. Role in growth and somatic gonad development is antagonized by histone-lysine N-methyltransferase set-2/SET1. Required for larval development, acting redundantly with hpl-2. Plays a role in the formation of the vulva and in fertility, acting together with a CoREST-like complex, and hpl-2. The chain is Chromobox protein homolog hpl-1 from Caenorhabditis elegans.